Reading from the N-terminus, the 197-residue chain is MNLIPMVIEQTNRGERSYDIYSRLLKDRIIFIGTGINDDIANSVIAQMLFLESEDPDKDIHLYINSPGGHVHAGLAIYDTMQYIRSDVSTICVGMAASMGAVLLAAGNEGKRFCLPNSRIMLHQPMGGAQGQAADVEIHAREIMKTKERLNQILAHHTGQPVEQISKDTDRDFFMSSEEAQKYGVIDDVLKRPPENS.

Ser-98 serves as the catalytic Nucleophile. The active site involves His-123.

This sequence belongs to the peptidase S14 family. Fourteen ClpP subunits assemble into 2 heptameric rings which stack back to back to give a disk-like structure with a central cavity, resembling the structure of eukaryotic proteasomes.

It localises to the cytoplasm. The enzyme catalyses Hydrolysis of proteins to small peptides in the presence of ATP and magnesium. alpha-casein is the usual test substrate. In the absence of ATP, only oligopeptides shorter than five residues are hydrolyzed (such as succinyl-Leu-Tyr-|-NHMec, and Leu-Tyr-Leu-|-Tyr-Trp, in which cleavage of the -Tyr-|-Leu- and -Tyr-|-Trp bonds also occurs).. Cleaves peptides in various proteins in a process that requires ATP hydrolysis. Has a chymotrypsin-like activity. Plays a major role in the degradation of misfolded proteins. The sequence is that of ATP-dependent Clp protease proteolytic subunit from Natranaerobius thermophilus (strain ATCC BAA-1301 / DSM 18059 / JW/NM-WN-LF).